A 130-amino-acid polypeptide reads, in one-letter code: Protein ApaG (130 aa).

Residues 3–127 (SAVTRGIEVT…FSLDVPEQRR (125 aa)) enclose the ApaG domain.

The chain is Protein ApaG from Brucella canis (strain ATCC 23365 / NCTC 10854 / RM-666).